Consider the following 354-residue polypeptide: Methylthioribose-1-phosphate isomerase (354 aa).

Substrate contacts are provided by residues 48–50 (RGA), Arg95, and Gln202. The active-site Proton donor is the Asp243. 253 to 254 (NK) contacts substrate.

The protein belongs to the eIF-2B alpha/beta/delta subunits family. MtnA subfamily.

It carries out the reaction 5-(methylsulfanyl)-alpha-D-ribose 1-phosphate = 5-(methylsulfanyl)-D-ribulose 1-phosphate. Its pathway is amino-acid biosynthesis; L-methionine biosynthesis via salvage pathway; L-methionine from S-methyl-5-thio-alpha-D-ribose 1-phosphate: step 1/6. Its function is as follows. Catalyzes the interconversion of methylthioribose-1-phosphate (MTR-1-P) into methylthioribulose-1-phosphate (MTRu-1-P). The polypeptide is Methylthioribose-1-phosphate isomerase (Roseiflexus castenholzii (strain DSM 13941 / HLO8)).